We begin with the raw amino-acid sequence, 348 residues long: Dehydrogenase orsE (348 aa).

Residue 43–46 (LDTH) coordinates NADP(+). 130 to 137 (FAVEAAVC) is a binding site for substrate. Residues 180-183 (SSSV), 203-206 (GAHN), and 272-273 (VH) each bind NADP(+). Residue 292–296 (NDIAT) participates in substrate binding. Position 339–340 (339–340 (VS)) interacts with NADP(+).

The protein belongs to the zinc-containing alcohol dehydrogenase family. In terms of assembly, monomer.

Functionally, dehydrogenase; part of the gene cluster that mediates the biosynthesis of orsellinic acid, as well as of the cathepsin K inhibitors F9775 A and F9775 B. The non-reducing polyketide synthase orsA produces orsellinic acid by condensing acetyl-CoA with 3 malonyl-CoA units. Further modifications by the decarboxylase orsB and the tyrosinase-like protein orsC lead to the production of F9775 A and F9775 B. The functions of orsD and orsE remain unclear since only orsB and orsC are required to convert orsellinic acid into F9775 A and F9775 B. The chain is Dehydrogenase orsE from Emericella nidulans (strain FGSC A4 / ATCC 38163 / CBS 112.46 / NRRL 194 / M139) (Aspergillus nidulans).